A 158-amino-acid polypeptide reads, in one-letter code: Large ribosomal subunit protein uL11 (158 aa).

A disordered region spans residues 1–28 (MAGTIEALVPGGQATPGPPLGPELGPTP).

The protein belongs to the universal ribosomal protein uL11 family. In terms of assembly, part of the ribosomal stalk of the 50S ribosomal subunit. Interacts with L10 and the large rRNA to form the base of the stalk. L10 forms an elongated spine to which L12 dimers bind in a sequential fashion forming a multimeric L10(L12)X complex.

In terms of biological role, forms part of the ribosomal stalk which helps the ribosome interact with GTP-bound translation factors. The sequence is that of Large ribosomal subunit protein uL11 from Halorubrum lacusprofundi (strain ATCC 49239 / DSM 5036 / JCM 8891 / ACAM 34).